The primary structure comprises 273 residues: Formamidopyrimidine-DNA glycosylase (273 aa).

Pro2 acts as the Schiff-base intermediate with DNA in catalysis. The Proton donor role is filled by Glu3. Catalysis depends on Lys58, which acts as the Proton donor; for beta-elimination activity. His91, Arg110, and Arg153 together coordinate DNA. The segment at Lys238–Lys272 adopts an FPG-type zinc-finger fold. The Proton donor; for delta-elimination activity role is filled by Arg262.

This sequence belongs to the FPG family. Monomer. Zn(2+) is required as a cofactor.

The catalysed reaction is Hydrolysis of DNA containing ring-opened 7-methylguanine residues, releasing 2,6-diamino-4-hydroxy-5-(N-methyl)formamidopyrimidine.. It catalyses the reaction 2'-deoxyribonucleotide-(2'-deoxyribose 5'-phosphate)-2'-deoxyribonucleotide-DNA = a 3'-end 2'-deoxyribonucleotide-(2,3-dehydro-2,3-deoxyribose 5'-phosphate)-DNA + a 5'-end 5'-phospho-2'-deoxyribonucleoside-DNA + H(+). Its function is as follows. Involved in base excision repair of DNA damaged by oxidation or by mutagenic agents. Acts as a DNA glycosylase that recognizes and removes damaged bases. Has a preference for oxidized purines, such as 7,8-dihydro-8-oxoguanine (8-oxoG). Has AP (apurinic/apyrimidinic) lyase activity and introduces nicks in the DNA strand. Cleaves the DNA backbone by beta-delta elimination to generate a single-strand break at the site of the removed base with both 3'- and 5'-phosphates. This is Formamidopyrimidine-DNA glycosylase from Lactobacillus delbrueckii subsp. bulgaricus (strain ATCC BAA-365 / Lb-18).